A 172-amino-acid chain; its full sequence is Large ribosomal subunit protein uL10 (172 aa).

Belongs to the universal ribosomal protein uL10 family. As to quaternary structure, part of the ribosomal stalk of the 50S ribosomal subunit. The N-terminus interacts with L11 and the large rRNA to form the base of the stalk. The C-terminus forms an elongated spine to which L12 dimers bind in a sequential fashion forming a multimeric L10(L12)X complex.

Functionally, forms part of the ribosomal stalk, playing a central role in the interaction of the ribosome with GTP-bound translation factors. The chain is Large ribosomal subunit protein uL10 from Chlorobium chlorochromatii (strain CaD3).